A 508-amino-acid chain; its full sequence is Photosystem II CP47 reaction center protein (508 aa).

6 helical membrane-spanning segments follow: residues 21–36 (SVHIMHTALVSGWAGS), 101–115 (IVFSGLCFLAAIWHW), 140–156 (GIHLFLSGVACFGFGAF), 203–218 (IAAGTLGILAGLFHLS), 237–252 (VLSSSIAAVFFAAFVV), and 457–472 (SFALLFFFGHIWHGAR).

The protein belongs to the PsbB/PsbC family. PsbB subfamily. As to quaternary structure, PSII is composed of 1 copy each of membrane proteins PsbA, PsbB, PsbC, PsbD, PsbE, PsbF, PsbH, PsbI, PsbJ, PsbK, PsbL, PsbM, PsbT, PsbX, PsbY, PsbZ, Psb30/Ycf12, at least 3 peripheral proteins of the oxygen-evolving complex and a large number of cofactors. It forms dimeric complexes. Binds multiple chlorophylls. PSII binds additional chlorophylls, carotenoids and specific lipids. serves as cofactor.

Its subcellular location is the plastid. The protein localises to the chloroplast thylakoid membrane. One of the components of the core complex of photosystem II (PSII). It binds chlorophyll and helps catalyze the primary light-induced photochemical processes of PSII. PSII is a light-driven water:plastoquinone oxidoreductase, using light energy to abstract electrons from H(2)O, generating O(2) and a proton gradient subsequently used for ATP formation. This chain is Photosystem II CP47 reaction center protein, found in Nuphar advena (Common spatterdock).